Reading from the N-terminus, the 463-residue chain is Bifunctional protein GlmU (463 aa).

Residues 1–233 (MSKKSTFIIL…NFEVMGINSR (233 aa)) are pyrophosphorylase. UDP-N-acetyl-alpha-D-glucosamine contacts are provided by residues 10 to 13 (LAAG), K24, Q76, 81 to 82 (GT), 104 to 106 (YGD), G143, E158, N173, and N231. D106 contributes to the Mg(2+) binding site. N231 contacts Mg(2+). Residues 234 to 254 (YELFVAEQELKLRINKEHLSK) are linker. The interval 255 to 463 (GVQIIDIYST…LRRKQMYENR (209 aa)) is N-acetyltransferase. 2 residues coordinate UDP-N-acetyl-alpha-D-glucosamine: R336 and K354. H366 serves as the catalytic Proton acceptor. UDP-N-acetyl-alpha-D-glucosamine contacts are provided by Y369 and N380. Residues 389-390 (NY), A426, and R443 each bind acetyl-CoA.

The protein in the N-terminal section; belongs to the N-acetylglucosamine-1-phosphate uridyltransferase family. This sequence in the C-terminal section; belongs to the transferase hexapeptide repeat family. Homotrimer. Requires Mg(2+) as cofactor.

The protein resides in the cytoplasm. The catalysed reaction is alpha-D-glucosamine 1-phosphate + acetyl-CoA = N-acetyl-alpha-D-glucosamine 1-phosphate + CoA + H(+). It catalyses the reaction N-acetyl-alpha-D-glucosamine 1-phosphate + UTP + H(+) = UDP-N-acetyl-alpha-D-glucosamine + diphosphate. Its pathway is nucleotide-sugar biosynthesis; UDP-N-acetyl-alpha-D-glucosamine biosynthesis; N-acetyl-alpha-D-glucosamine 1-phosphate from alpha-D-glucosamine 6-phosphate (route II): step 2/2. It participates in nucleotide-sugar biosynthesis; UDP-N-acetyl-alpha-D-glucosamine biosynthesis; UDP-N-acetyl-alpha-D-glucosamine from N-acetyl-alpha-D-glucosamine 1-phosphate: step 1/1. The protein operates within bacterial outer membrane biogenesis; LPS lipid A biosynthesis. Functionally, catalyzes the last two sequential reactions in the de novo biosynthetic pathway for UDP-N-acetylglucosamine (UDP-GlcNAc). The C-terminal domain catalyzes the transfer of acetyl group from acetyl coenzyme A to glucosamine-1-phosphate (GlcN-1-P) to produce N-acetylglucosamine-1-phosphate (GlcNAc-1-P), which is converted into UDP-GlcNAc by the transfer of uridine 5-monophosphate (from uridine 5-triphosphate), a reaction catalyzed by the N-terminal domain. The chain is Bifunctional protein GlmU from Caldicellulosiruptor saccharolyticus (strain ATCC 43494 / DSM 8903 / Tp8T 6331).